The sequence spans 239 residues: Cysteine-rich venom protein kaouthin-1 (239 aa).

Positions 1–18 are cleaved as a signal peptide; it reads MIAFSLLCLAAVLRQSFG. Positions 37 to 165 constitute an SCP domain; sequence VDLHNSLRRR…AWSYFYVCQY (129 aa). 8 disulfides stabilise this stretch: cysteine 74/cysteine 152, cysteine 91/cysteine 166, cysteine 147/cysteine 163, cysteine 185/cysteine 192, cysteine 188/cysteine 197, cysteine 201/cysteine 234, cysteine 210/cysteine 228, and cysteine 219/cysteine 232. Residues 201-234 form the ShKT domain; sequence CTIYNKLTNCDSLLKQGSCQDDWIKSNCPASCFC.

The protein belongs to the CRISP family. Expressed by the venom gland.

Its subcellular location is the secreted. Functionally, inhibits calcium-activated potassium channels (KCa), voltage-gated potassium channel (Kv), and the calcium release channel/ryanodine receptor (RyR). This is Cysteine-rich venom protein kaouthin-1 from Naja kaouthia (Monocled cobra).